Consider the following 238-residue polypeptide: Modulator of macroautophagy TMEM150B (238 aa).

Over M1–L8 the chain is Cytoplasmic. A helical transmembrane segment spans residues P9–V29. N-linked (GlcNAc...) asparagine glycosylation is present at N30. The Extracellular segment spans residues N30–Q51. A helical membrane pass occupies residues S52–V72. Residues R73–Q86 lie on the Cytoplasmic side of the membrane. The chain crosses the membrane as a helical span at residues N87 to F107. Residues Q108 to H116 lie on the Extracellular side of the membrane. Residues L117–L137 form a helical membrane-spanning segment. Topologically, residues S138 to R156 are cytoplasmic. Residues L157–H177 traverse the membrane as a helical segment. The Extracellular segment spans residues M178–E186. Residues W187–L207 traverse the membrane as a helical segment. The Cytoplasmic segment spans residues R208–L238.

This sequence belongs to the DRAM/TMEM150 family.

The protein resides in the cell membrane. It localises to the endosome membrane. It is found in the cytoplasmic vesicle. Its subcellular location is the autophagosome membrane. Functionally, modulator of macroautophagy that causes accumulation of autophagosomes under basal conditions and enhances autophagic flux. Represses cell death and promotes long-term clonogenic survival of cells grown in the absence of glucose in a macroautophagy-independent manner. May have some role in extracellular matrix engulfment or growth factor receptor recycling, both of which can modulate cell survival. This Mus musculus (Mouse) protein is Modulator of macroautophagy TMEM150B.